A 351-amino-acid chain; its full sequence is Ion-translocating oxidoreductase complex subunit D (351 aa).

The next 4 helical transmembrane spans lie at 18–38 (IMLLVILACIPGIIAQTYFFG), 40–60 (GSLIQVMLAMITALLAEGAVL), 87–107 (LPPLAPWWMIVLGTLFAIVIA), and 121–141 (PAMVGYVVLLISFPVQMTSWL). An FMN phosphoryl threonine modification is found at T185. Helical transmembrane passes span 211 to 231 (VLAGLGWQWVNIGFLVGGLLL), 241 to 261 (IPVSFLLALGGCAAVSWMIAP), 264 to 284 (FASPMLHLFSGATMLGAFFIA), 298 to 318 (LIFGALIGILVWLIRVYGGYP), and 320 to 340 (GVAFAVLLANITVPLIDHYTQ).

The protein belongs to the NqrB/RnfD family. The complex is composed of six subunits: RnfA, RnfB, RnfC, RnfD, RnfE and RnfG. FMN serves as cofactor.

The protein localises to the cell inner membrane. Part of a membrane-bound complex that couples electron transfer with translocation of ions across the membrane. The chain is Ion-translocating oxidoreductase complex subunit D from Yersinia pseudotuberculosis serotype I (strain IP32953).